The following is a 518-amino-acid chain: MGSLPANNFESMSLCSQNPLDPDEFRRQGHMIIDFLADYYKNVEKYPVRTQVDPGYLKKRLPESAPYNPESIETILEDVTNDIIPGLTHWQSPNYFAYFPSSGSIAGFLGEMLSTGFNVVGFNWMSSPAATELESIVMNWLGQMLTLPKSFLFSSDGSSGGGGVLQGTTCEAILCTLTAARDKMLNKIGRENINKLVVYASDQTLSALQKAAQIAGINPKNFLAIATSKATNFGLSPNSLQSTILADIESGLVPLFLCATVGTTSSTAVDPIGPLCAVAKLHGIWVHIDAAYAGSACICPEFRHFIDGVEDADSFSLNAHKWFFTTLDCCCLWVKDSDSLVKALSTSPEYLKNKATDSKQVIDYKDWQIALSRRFRSMKLWLVLRSYGIANLRTFLRSHVKMAKHFQGLIGMDNRFEIVVPRTFAMVCFRLKPAAIFRKKIVEDDHIEAQTNEVNAKLLESVNASGKIYMTHAVVGGVYMIRFAVGATLTEERHVTGAWKVVQEHTDAILGALGEDVC.

Residue Lys321 is modified to N6-(pyridoxal phosphate)lysine.

It belongs to the group II decarboxylase family. In terms of assembly, homodimer. Requires pyridoxal 5'-phosphate as cofactor. As to expression, predominantly expressed in the roots.

It carries out the reaction L-tyrosine + H(+) = tyramine + CO2. It catalyses the reaction L-dopa + H(+) = dopamine + CO2. The catalysed reaction is 5-hydroxy-L-tryptophan + H(+) = serotonin + CO2. Marginally higher substrate specificity for L-DOPA over L-tyrosine. In Papaver somniferum (Opium poppy), this protein is Tyrosine/DOPA decarboxylase 1 (TYDC1).